We begin with the raw amino-acid sequence, 274 residues long: Large ribosomal subunit protein uL2cz/uL2cy (274 aa).

Disordered regions lie at residues 1 to 23 (MAIHLYKTSTPSTRNRAVDSQVK) and 224 to 274 (NPVD…RRSK).

Belongs to the universal ribosomal protein uL2 family. As to quaternary structure, part of the 50S ribosomal subunit.

Its subcellular location is the plastid. It localises to the chloroplast. The protein is Large ribosomal subunit protein uL2cz/uL2cy (rpl2-A) of Vitis vinifera (Grape).